A 227-amino-acid chain; its full sequence is Ornithine decarboxylase antizyme 1 (227 aa).

Belongs to the ODC antizyme family. As to quaternary structure, interacts with ODC1 and thereby sterically blocks ODC homodimerization. Forms a ternary complex with PSMB4 and OAZ1 before PSMB4 is incorporated into the 20S proteasome. Interacts with AZIN2; this interaction disrupts the interaction between the antizyme and ODC1. Interacts with FAM171A1.

Ornithine decarboxylase (ODC) antizyme protein that negatively regulates ODC activity and intracellular polyamine biosynthesis and uptake in response to increased intracellular polyamine levels. Binds to ODC monomers, inhibiting the assembly of the functional ODC homodimer, and targets the monomers for ubiquitin-independent proteolytic destruction by the 26S proteasome. Triggers ODC degradation by inducing the exposure of a cryptic proteasome-interacting surface of ODC. Stabilizes AZIN2 by interfering with its ubiquitination. Also inhibits cellular uptake of polyamines by inactivating the polyamine uptake transporter. SMAD1/OAZ1/PSMB4 complex mediates the degradation of the CREBBP/EP300 repressor SNIP1. Involved in the translocation of AZIN2 from ER-Golgi intermediate compartment (ERGIC) to the cytosol. This Mus musculus (Mouse) protein is Ornithine decarboxylase antizyme 1 (Oaz1).